A 199-amino-acid polypeptide reads, in one-letter code: Probable cobalt-precorrin-6B C(15)-methyltransferase (decarboxylating) (199 aa).

Residues Thr24, 48–52 (GCGTG), Asp72, and Ala101 each bind S-adenosyl-L-methionine.

It belongs to the methyltransferase superfamily. Archaeal-type CbiT family.

The catalysed reaction is Co-precorrin-6B + S-adenosyl-L-methionine = Co-precorrin-7 + S-adenosyl-L-homocysteine + CO2. It participates in cofactor biosynthesis; adenosylcobalamin biosynthesis; cob(II)yrinate a,c-diamide from sirohydrochlorin (anaerobic route): step 8/10. Its function is as follows. Catalyzes the methylation of C-15 in cobalt-precorrin-6B followed by the decarboxylation of C-12 to form cobalt-precorrin-7. This chain is Probable cobalt-precorrin-6B C(15)-methyltransferase (decarboxylating), found in Saccharolobus solfataricus (strain ATCC 35092 / DSM 1617 / JCM 11322 / P2) (Sulfolobus solfataricus).